A 316-amino-acid chain; its full sequence is DNA-directed RNA polymerase subunit alpha (316 aa).

Positions 1 to 229 (MLEMEKPRID…EYLKLFTEID (229 aa)) are alpha N-terminal domain (alpha-NTD). Residues 246–316 (KDKILEMSIE…LNLSFRKSED (71 aa)) are alpha C-terminal domain (alpha-CTD).

This sequence belongs to the RNA polymerase alpha chain family. In terms of assembly, homodimer. The RNAP catalytic core consists of 2 alpha, 1 beta, 1 beta' and 1 omega subunit. When a sigma factor is associated with the core the holoenzyme is formed, which can initiate transcription.

The enzyme catalyses RNA(n) + a ribonucleoside 5'-triphosphate = RNA(n+1) + diphosphate. In terms of biological role, DNA-dependent RNA polymerase catalyzes the transcription of DNA into RNA using the four ribonucleoside triphosphates as substrates. This chain is DNA-directed RNA polymerase subunit alpha, found in Syntrophomonas wolfei subsp. wolfei (strain DSM 2245B / Goettingen).